The primary structure comprises 418 residues: Tyrosine--tRNA ligase (418 aa).

L-tyrosine is bound at residue Tyr34. Residues Pro39 to His48 carry the 'HIGH' region motif. L-tyrosine is bound by residues Tyr169 and Gln173. The 'KMSKS' region signature appears at Lys229 to Ser233. ATP is bound at residue Lys232. The S4 RNA-binding domain occupies Leu352 to Tyr418.

Belongs to the class-I aminoacyl-tRNA synthetase family. TyrS type 1 subfamily. Homodimer.

The protein resides in the cytoplasm. The enzyme catalyses tRNA(Tyr) + L-tyrosine + ATP = L-tyrosyl-tRNA(Tyr) + AMP + diphosphate + H(+). Its function is as follows. Catalyzes the attachment of tyrosine to tRNA(Tyr) in a two-step reaction: tyrosine is first activated by ATP to form Tyr-AMP and then transferred to the acceptor end of tRNA(Tyr). The chain is Tyrosine--tRNA ligase from Streptococcus pyogenes serotype M6 (strain ATCC BAA-946 / MGAS10394).